We begin with the raw amino-acid sequence, 427 residues long: MSSIVVVGTQWGDEGKGKITDFLAEQSDVIARFSGGNNAGHTIQFGGETYKLHLVPSGIFYKDKLAVIGNGVVVDPVALLKELDGLNERGIPTSNLRISNRAQVILPYHLAQDEYEERLRGDNKIGTTKKGIGPAYVDKVQRIGIRMADLLEKETFERLLKSNIEYKQAYFKGMFNETCPSFDDIFEEYYAAGQRLKEFVTDTSKILDDAFVADEKVLFEGAQGVMLDIDHGTYPFVTSSNPIAGNVTVGTGVGPTFVSKVIGVCKAYTSRVGDGPFPTELFDEDGHHIREVGREYGTTTGRPRRVGWFDSVVLRHSRRVSGITDLSINSIDVLTGLDTVKICTAYELDGKEITEYPANLDQLKRCKPIFEELPGWTEDVTSVRTLEELPENARKYLERISELCNVQISIFSVGPDREQTNLLKELW.

GTP-binding positions include 12-18 (GDEGKGK) and 40-42 (GHT). Residue Asp13 is the Proton acceptor of the active site. Mg(2+) contacts are provided by Asp13 and Gly40. IMP contacts are provided by residues 13-16 (DEGK), 38-41 (NAGH), Thr128, Arg142, Gln223, Thr238, and Arg302. The active-site Proton donor is His41. 298–304 (TTTGRPR) serves as a coordination point for substrate. GTP-binding positions include Arg304, 330-332 (SID), and 412-414 (SVG).

It belongs to the adenylosuccinate synthetase family. As to quaternary structure, homodimer. The cofactor is Mg(2+).

The protein localises to the cytoplasm. The catalysed reaction is IMP + L-aspartate + GTP = N(6)-(1,2-dicarboxyethyl)-AMP + GDP + phosphate + 2 H(+). Its pathway is purine metabolism; AMP biosynthesis via de novo pathway; AMP from IMP: step 1/2. Functionally, plays an important role in the de novo pathway of purine nucleotide biosynthesis. Catalyzes the first committed step in the biosynthesis of AMP from IMP. This is Adenylosuccinate synthetase from Staphylococcus aureus (strain N315).